We begin with the raw amino-acid sequence, 339 residues long: MTDKIKEYIAEAKAFSTQNKEKLEEFRIKFLGSKGLVKDIFAEFKNVPNDQKKEFGQVINLLKTIAEEKVKTITEELESKEEIKSLYGDLSRPSEHIKIGSRHPISLIKNQIIDIFSNIGFNVSEGPEIEDDWHNFTALNLPEYHPARDMQDTFFIQTNPDILLRTHTSSVQVRYMENNKPPIRTISPGRVFRNEAVSSRSHCIFHQVEGLYIDKDVSFADMKQTLLYFTKEMFGKSKIRLRPSYFPFTEPSAEIDIYWGLKTETDYRITKGTGWLEIGGCGMVDPNVLKNCGIEPDQFNGFAFGMGIERIAMLIYQIGDIRMFYENDIRFLEQFKSTI.

E250 serves as a coordination point for Mg(2+).

It belongs to the class-II aminoacyl-tRNA synthetase family. Phe-tRNA synthetase alpha subunit type 1 subfamily. In terms of assembly, tetramer of two alpha and two beta subunits. It depends on Mg(2+) as a cofactor.

The protein localises to the cytoplasm. The catalysed reaction is tRNA(Phe) + L-phenylalanine + ATP = L-phenylalanyl-tRNA(Phe) + AMP + diphosphate + H(+). The polypeptide is Phenylalanine--tRNA ligase alpha subunit (Flavobacterium psychrophilum (strain ATCC 49511 / DSM 21280 / CIP 103535 / JIP02/86)).